Reading from the N-terminus, the 1132-residue chain is Tyrosine-protein kinase JAK2 (1132 aa).

Residues 1 to 239 are interaction with cytokine/interferon/growth hormone receptors; sequence MGMACLTMTE…RYRFRRFIQQ (239 aa). Residues 37–380 enclose the FERM domain; sequence PVLQVYLYHS…GYYRLTADAH (344 aa). Tyrosine 119 is modified (phosphotyrosine; by autocatalysis). Residues tyrosine 372 and tyrosine 373 each carry the phosphotyrosine modification. An SH2; atypical domain is found at 401-482; sequence HGPISMDFAI…NLKDLLNCYQ (82 aa). Residue serine 523 is modified to Phosphoserine. The Protein kinase 1 domain occupies 545–809; the sequence is LIFNESLGQG…AVIRDLNSLF (265 aa). Phosphotyrosine is present on residues tyrosine 570 and tyrosine 813. Residues 849 to 1124 enclose the Protein kinase 2 domain; it reads LKFLQQLGKG…SFRDLSLRVD (276 aa). Residue 855–863 coordinates ATP; sequence LGKGNFGSV. Tyrosine 868 carries the post-translational modification Phosphotyrosine; by autocatalysis. An ATP-binding site is contributed by lysine 882. 2 positions are modified to phosphotyrosine; by autocatalysis: tyrosine 966 and tyrosine 972. Aspartate 976 (proton acceptor) is an active-site residue. Tyrosine 1007 and tyrosine 1008 each carry phosphotyrosine; by autocatalysis.

The protein belongs to the protein kinase superfamily. Tyr protein kinase family. JAK subfamily. As to quaternary structure, interacts with IL23R, SKB1 and STAM2. Interacts with EPOR. Interacts with LYN. Interacts with SIRPA. Interacts with SH2B1. Interacts with TEC. Interacts with IFNGR2 (via intracellular domain). Interacts with LEPR (Isoform B). Interacts with HSP90AB1; promotes functional activation in a heat shock-dependent manner. Interacts with STRA6. Interacts with ASB2; the interaction targets JAK2 for Notch-induced proteasomal degradation. Interacts with MPL/TPOR. Mg(2+) serves as cofactor. Post-translationally, autophosphorylated, leading to regulate its activity. Leptin promotes phosphorylation on tyrosine residues, including phosphorylation on Tyr-813. Autophosphorylation on Tyr-119 in response to EPO down-regulates its kinase activity. Autophosphorylation on Tyr-868, Tyr-966 and Tyr-972 in response to growth hormone (GH) are required for maximal kinase activity. Also phosphorylated by TEC. Phosphorylated on tyrosine residues in response to interferon gamma signaling. Phosphorylated on tyrosine residues in response to a signaling cascade that is activated by increased cellular retinol. In terms of processing, undergoes Notch-induced ubiquitination and subsequent proteasomal degradation which is mediated by ASB1 or ASB2, the substrate-recognition components of probable ECS E3 ubiquitin-protein ligase complexes. Ubiquitously expressed throughout most tissues.

The protein localises to the endomembrane system. The protein resides in the cytoplasm. Its subcellular location is the nucleus. It catalyses the reaction L-tyrosyl-[protein] + ATP = O-phospho-L-tyrosyl-[protein] + ADP + H(+). Regulated by autophosphorylation, can both activate or decrease activity. Heme regulates its activity by enhancing the phosphorylation on Tyr-1007 and Tyr-1008. In terms of biological role, non-receptor tyrosine kinase involved in various processes such as cell growth, development, differentiation or histone modifications. Mediates essential signaling events in both innate and adaptive immunity. In the cytoplasm, plays a pivotal role in signal transduction via its association with type I receptors such as growth hormone (GHR), prolactin (PRLR), leptin (LEPR), erythropoietin (EPOR), thrombopoietin receptor (MPL/TPOR); or type II receptors including IFN-alpha, IFN-beta, IFN-gamma and multiple interleukins. Following ligand-binding to cell surface receptors, phosphorylates specific tyrosine residues on the cytoplasmic tails of the receptor, creating docking sites for STATs proteins. Subsequently, phosphorylates the STATs proteins once they are recruited to the receptor. Phosphorylated STATs then form homodimer or heterodimers and translocate to the nucleus to activate gene transcription. For example, cell stimulation with erythropoietin (EPO) during erythropoiesis leads to JAK2 autophosphorylation, activation, and its association with erythropoietin receptor (EPOR) that becomes phosphorylated in its cytoplasmic domain. Then, STAT5 (STAT5A or STAT5B) is recruited, phosphorylated and activated by JAK2. Once activated, dimerized STAT5 translocates into the nucleus and promotes the transcription of several essential genes involved in the modulation of erythropoiesis. Part of a signaling cascade that is activated by increased cellular retinol and that leads to the activation of STAT5 (STAT5A or STAT5B). In addition, JAK2 mediates angiotensin-2-induced ARHGEF1 phosphorylation. Plays a role in cell cycle by phosphorylating CDKN1B. Cooperates with TEC through reciprocal phosphorylation to mediate cytokine-driven activation of FOS transcription. In the nucleus, plays a key role in chromatin by specifically mediating phosphorylation of 'Tyr-41' of histone H3 (H3Y41ph), a specific tag that promotes exclusion of CBX5 (HP1 alpha) from chromatin. Up-regulates the potassium voltage-gated channel activity of KCNA3. The protein is Tyrosine-protein kinase JAK2 of Mus musculus (Mouse).